A 142-amino-acid polypeptide reads, in one-letter code: Large ribosomal subunit protein uL11 (142 aa).

The protein belongs to the universal ribosomal protein uL11 family. As to quaternary structure, part of the ribosomal stalk of the 50S ribosomal subunit. Interacts with L10 and the large rRNA to form the base of the stalk. L10 forms an elongated spine to which L12 dimers bind in a sequential fashion forming a multimeric L10(L12)X complex. One or more lysine residues are methylated.

Its function is as follows. Forms part of the ribosomal stalk which helps the ribosome interact with GTP-bound translation factors. In Mycoplasma mycoides subsp. mycoides SC (strain CCUG 32753 / NCTC 10114 / PG1), this protein is Large ribosomal subunit protein uL11.